The primary structure comprises 163 residues: Nucleotide-binding protein Asuc_2113 (163 aa).

Belongs to the YajQ family.

Nucleotide-binding protein. The polypeptide is Nucleotide-binding protein Asuc_2113 (Actinobacillus succinogenes (strain ATCC 55618 / DSM 22257 / CCUG 43843 / 130Z)).